A 346-amino-acid polypeptide reads, in one-letter code: MESLPTTVPSKSERRARSSKFSQSSSKPSVIMAFFSCVAWLYVAGRLWQDAENRVVLNNILKKSYDQKPKVLTVDDKLMVLGCKDLERRIVETEMELTLAKSQGYLKNLKSGSSSGKKLLAVIGVYSGFGSHLRRNTFRGSYMPQGDALRKLEERGIVIRFVIGRSPNRGDSLDRKIDEENQARKDFLILENHEEAQEELAKKVKFFFSAAVQNWDAEFYIKVDDNIDLDLEGLIGLLESRRGQDAAYIGCMKSGEVVAEEGGKWYEPEWWKFGDEKSYFRHAAGSLLILSKTLAQYVNINSGSLKTYAFDDTSIGSWMIGVQATYIDDNRLCCSSIRQDKVCSVA.

The span at 1 to 10 (MESLPTTVPS) shows a compositional bias: polar residues. Residues 1–21 (MESLPTTVPSKSERRARSSKF) form a disordered region. Topologically, residues 1–28 (MESLPTTVPSKSERRARSSKFSQSSSKP) are cytoplasmic. Residues 29 to 45 (SVIMAFFSCVAWLYVAG) traverse the membrane as a helical; Signal-anchor for type II membrane protein segment. Residues 46-346 (RLWQDAENRV…IRQDKVCSVA (301 aa)) are Lumenal-facing.

The protein belongs to the glycosyltransferase 31 family. Requires Mn(2+) as cofactor. Expressed in roots, rosette leaves, cauline leaves, stems, flowers and siliques.

The protein localises to the golgi apparatus membrane. It participates in protein modification; protein glycosylation. Its function is as follows. Possesses hydroxyproline O-galactosyltransferase activity. Transfers galactose from UDP-galactose to hydroxyproline residues in the arabinogalactan proteins (AGPs). Is specific for AGPs containing non-contiguous peptidyl hydroxyproline residues. The addition of galactose onto the peptidyl hydroxyproline residues in AGP core proteins represents the first committed step in arabinogalactan polysaccharide addition. AGP glycans play essential roles in both vegetative and reproductive plant growth. The sequence is that of Hydroxyproline O-galactosyltransferase HPGT3 from Arabidopsis thaliana (Mouse-ear cress).